Consider the following 130-residue polypeptide: S-adenosylmethionine decarboxylase proenzyme (130 aa).

The active-site Schiff-base intermediate with substrate; via pyruvic acid is Ser-63. Pyruvic acid (Ser); by autocatalysis is present on Ser-63. The active-site Proton acceptor; for processing activity is the His-68. Cys-83 functions as the Proton donor; for catalytic activity in the catalytic mechanism.

The protein belongs to the prokaryotic AdoMetDC family. Type 1 subfamily. Heterotetramer of two alpha and two beta chains arranged as a dimer of alpha/beta heterodimers. Pyruvate is required as a cofactor. Post-translationally, is synthesized initially as an inactive proenzyme. Formation of the active enzyme involves a self-maturation process in which the active site pyruvoyl group is generated from an internal serine residue via an autocatalytic post-translational modification. Two non-identical subunits are generated from the proenzyme in this reaction, and the pyruvate is formed at the N-terminus of the alpha chain, which is derived from the carboxyl end of the proenzyme. The post-translation cleavage follows an unusual pathway, termed non-hydrolytic serinolysis, in which the side chain hydroxyl group of the serine supplies its oxygen atom to form the C-terminus of the beta chain, while the remainder of the serine residue undergoes an oxidative deamination to produce ammonia and the pyruvoyl group blocking the N-terminus of the alpha chain.

It catalyses the reaction S-adenosyl-L-methionine + H(+) = S-adenosyl 3-(methylsulfanyl)propylamine + CO2. It participates in amine and polyamine biosynthesis; S-adenosylmethioninamine biosynthesis; S-adenosylmethioninamine from S-adenosyl-L-methionine: step 1/1. In terms of biological role, catalyzes the decarboxylation of S-adenosylmethionine to S-adenosylmethioninamine (dcAdoMet), the propylamine donor required for the synthesis of the polyamines spermine and spermidine from the diamine putrescine. In Thermotoga maritima (strain ATCC 43589 / DSM 3109 / JCM 10099 / NBRC 100826 / MSB8), this protein is S-adenosylmethionine decarboxylase proenzyme (speH).